Reading from the N-terminus, the 124-residue chain is Large ribosomal subunit protein bL19 (124 aa).

It belongs to the bacterial ribosomal protein bL19 family.

Its function is as follows. This protein is located at the 30S-50S ribosomal subunit interface and may play a role in the structure and function of the aminoacyl-tRNA binding site. This chain is Large ribosomal subunit protein bL19, found in Cereibacter sphaeroides (strain ATCC 17029 / ATH 2.4.9) (Rhodobacter sphaeroides).